Here is a 349-residue protein sequence, read N- to C-terminus: Phosphoribosylformylglycinamidine cyclo-ligase (349 aa).

It belongs to the AIR synthase family.

The protein localises to the cytoplasm. The enzyme catalyses 2-formamido-N(1)-(5-O-phospho-beta-D-ribosyl)acetamidine + ATP = 5-amino-1-(5-phospho-beta-D-ribosyl)imidazole + ADP + phosphate + H(+). It participates in purine metabolism; IMP biosynthesis via de novo pathway; 5-amino-1-(5-phospho-D-ribosyl)imidazole from N(2)-formyl-N(1)-(5-phospho-D-ribosyl)glycinamide: step 2/2. In Lactobacillus delbrueckii subsp. bulgaricus (strain ATCC 11842 / DSM 20081 / BCRC 10696 / JCM 1002 / NBRC 13953 / NCIMB 11778 / NCTC 12712 / WDCM 00102 / Lb 14), this protein is Phosphoribosylformylglycinamidine cyclo-ligase.